A 179-amino-acid polypeptide reads, in one-letter code: GTP-dependent dephospho-CoA kinase (179 aa).

GTP contacts are provided by Asp-49, Val-50, Val-51, Asp-68, Lys-70, and Glu-126.

Belongs to the GTP-dependent DPCK family.

It catalyses the reaction 3'-dephospho-CoA + GTP = GDP + CoA + H(+). Its pathway is cofactor biosynthesis; coenzyme A biosynthesis. Catalyzes the GTP-dependent phosphorylation of the 3'-hydroxyl group of dephosphocoenzyme A to form coenzyme A (CoA). The sequence is that of GTP-dependent dephospho-CoA kinase from Pyrococcus abyssi (strain GE5 / Orsay).